We begin with the raw amino-acid sequence, 369 residues long: Guanine nucleotide-binding protein subunit beta-2 (369 aa).

Positions 1-24 are enriched in polar residues; sequence MSTIAGESSSSSKMPENSQPTTTE. The disordered stretch occupies residues 1–28; the sequence is MSTIAGESSSSSKMPENSQPTTTEKGSE. WD repeat units follow at residues 79–109, 121–151, 167–197, 209–241, 253–283, 297–327, and 339–369; these read GHVGKVLCMDWSLDKRHIVSSSQDGKVIVWD, MPTTWVMACAFSPSSQMIACGGLDNKCSVVP, THTSYMSCCTFLRSDNLILTGSGDSTCAIWD, GHTGDVFAIDVPKCDTGNTFISAGADKHSLVWD, GHEADINTVRFHPNGDAFATGSDDATCRLFD, SILFPVNGVDFSLSGRILFAGYGDYRVGVWD, and GHENRISCLRTSPDGTAVCSASWDCTIRIWA.

Belongs to the WD repeat G protein beta family. As to quaternary structure, g proteins are composed of 3 units, alpha, beta and gamma. Interacts with G protein gamma subunits gpc-1 and gpc-2 and with egl-10 and eat-16.

Its function is as follows. Guanine nucleotide-binding proteins (G proteins) are involved as a modulator or transducer in various transmembrane signaling systems. The beta and gamma chains are required for the GTPase activity, for replacement of GDP by GTP, and for G protein-effector interaction. Plays a role in regulating dopamine-mediated locomotion behavior. The sequence is that of Guanine nucleotide-binding protein subunit beta-2 from Caenorhabditis elegans.